A 310-amino-acid chain; its full sequence is DNA-directed RNA polymerase subunit alpha (310 aa).

The segment at 1–230 (MLGKVNGVQI…KLFNPLRVLD (230 aa)) is alpha N-terminal domain (alpha-NTD). Positions 242–310 (NSLIKQKLIE…YKKFGVKLKH (69 aa)) are alpha C-terminal domain (alpha-CTD).

It belongs to the RNA polymerase alpha chain family. In terms of assembly, in plastids the minimal PEP RNA polymerase catalytic core is composed of four subunits: alpha, beta, beta', and beta''. When a (nuclear-encoded) sigma factor is associated with the core the holoenzyme is formed, which can initiate transcription.

The protein resides in the plastid. It localises to the chloroplast. The catalysed reaction is RNA(n) + a ribonucleoside 5'-triphosphate = RNA(n+1) + diphosphate. Its function is as follows. DNA-dependent RNA polymerase catalyzes the transcription of DNA into RNA using the four ribonucleoside triphosphates as substrates. This chain is DNA-directed RNA polymerase subunit alpha, found in Cyanidium caldarium (Red alga).